The chain runs to 343 residues: Dihydroorotase (343 aa).

Residues His-14 and His-16 each contribute to the Zn(2+) site. Substrate-binding positions include 16–18 and Asn-42; that span reads HVR. Zn(2+) contacts are provided by Lys-99, His-136, and His-174. Lys-99 carries the post-translational modification N6-carboxylysine. His-136 is a substrate binding site. Substrate is bound at residue Leu-219. Position 247 (Asp-247) interacts with Zn(2+). Asp-247 is an active-site residue. 2 residues coordinate substrate: His-251 and Ala-263.

Belongs to the metallo-dependent hydrolases superfamily. DHOase family. Class II DHOase subfamily. As to quaternary structure, homodimer. Requires Zn(2+) as cofactor.

The catalysed reaction is (S)-dihydroorotate + H2O = N-carbamoyl-L-aspartate + H(+). It functions in the pathway pyrimidine metabolism; UMP biosynthesis via de novo pathway; (S)-dihydroorotate from bicarbonate: step 3/3. Catalyzes the reversible cyclization of carbamoyl aspartate to dihydroorotate. The protein is Dihydroorotase of Variovorax paradoxus (strain S110).